The following is a 175-amino-acid chain: NAD(P)H-quinone oxidoreductase subunit J (175 aa).

This sequence belongs to the complex I 30 kDa subunit family. In terms of assembly, NDH-1 can be composed of about 15 different subunits; different subcomplexes with different compositions have been identified which probably have different functions.

Its subcellular location is the cellular thylakoid membrane. The enzyme catalyses a plastoquinone + NADH + (n+1) H(+)(in) = a plastoquinol + NAD(+) + n H(+)(out). The catalysed reaction is a plastoquinone + NADPH + (n+1) H(+)(in) = a plastoquinol + NADP(+) + n H(+)(out). Functionally, NDH-1 shuttles electrons from an unknown electron donor, via FMN and iron-sulfur (Fe-S) centers, to quinones in the respiratory and/or the photosynthetic chain. The immediate electron acceptor for the enzyme in this species is believed to be plastoquinone. Couples the redox reaction to proton translocation, and thus conserves the redox energy in a proton gradient. Cyanobacterial NDH-1 also plays a role in inorganic carbon-concentration. The protein is NAD(P)H-quinone oxidoreductase subunit J of Trichormus variabilis (strain ATCC 29413 / PCC 7937) (Anabaena variabilis).